The following is a 400-amino-acid chain: MQREKIAIAYSGGLDTSIMIKWLKDKYDADIVAVTGNLGQQKEIENLESKAIATGASGFHFVDLKKPFVEDYIWRALKAGALYEDVYPLATALGRPLLAKALVDVALEENCTMLAHGCTGKGNDQVRFEVTFASLAPHLKVLAPLREWEFTSRESEMDYAIKHNIPVSATKKSPYSIDENIWGISIECGVLEDPMVAPPEDAYQITTSPENAPNEATVVEIEFEQGVPVSVDGKKMAGLDIINRLNELGAKNGIGRLDMIENRVVGIKSREIYEAPAATILHFAHRELERLTLEKTVFQYKKNIAQDYANIIYNGTWFSPMRTALDAFVDDTQKPVTGMVRLKLFKGSVTLLGRQSPYSLYNESLATYTEADSFDHKAAAGFIQIYGLGLKTFSEVHPAK.

9-17 provides a ligand contact to ATP; sequence AYSGGLDTS. Tyr87 lines the L-citrulline pocket. Residue Gly117 participates in ATP binding. L-aspartate is bound by residues Thr119, Asn123, and Asp124. Position 123 (Asn123) interacts with L-citrulline. L-citrulline contacts are provided by Arg127, Ser176, Ser185, Glu261, and Tyr273.

The protein belongs to the argininosuccinate synthase family. Type 1 subfamily. Homotetramer.

The protein localises to the cytoplasm. The enzyme catalyses L-citrulline + L-aspartate + ATP = 2-(N(omega)-L-arginino)succinate + AMP + diphosphate + H(+). Its pathway is amino-acid biosynthesis; L-arginine biosynthesis; L-arginine from L-ornithine and carbamoyl phosphate: step 2/3. In Chlorobium luteolum (strain DSM 273 / BCRC 81028 / 2530) (Pelodictyon luteolum), this protein is Argininosuccinate synthase.